The primary structure comprises 260 residues: MSQRTRLSVNVNKIAVLRNSRGHGAPDVIRAASACIDAGAHGITVHPRPDARHIRHDDVIGLSTLTRARGVEFNIEGNPFAEPRAGYCGLLALCRETRPHQVTLVPDGDQQITSDHGFDFAREGPGLRPLIDEIKQWGCRVSLFVDVNVTGLADAAIWGVDRIELYTGPYAEMHHAGCSDAVLREFATTARLAQDVGLGVNAGHDLSQTNLGVFLGAVPDVLEVSIGHALISEALYEGLIPTVRRYLDILDSVNPAVSMR.

Residues Asn-10 and Arg-21 each coordinate 3-amino-2-oxopropyl phosphate. His-46 serves as the catalytic Proton acceptor. Arg-48 and His-53 together coordinate 1-deoxy-D-xylulose 5-phosphate. Glu-76 functions as the Proton acceptor in the catalytic mechanism. Thr-113 is a binding site for 1-deoxy-D-xylulose 5-phosphate. The Proton donor role is filled by His-204. Residues Asp-205 and 227 to 228 (GH) contribute to the 3-amino-2-oxopropyl phosphate site.

The protein belongs to the PNP synthase family. Homooctamer; tetramer of dimers.

Its subcellular location is the cytoplasm. The catalysed reaction is 3-amino-2-oxopropyl phosphate + 1-deoxy-D-xylulose 5-phosphate = pyridoxine 5'-phosphate + phosphate + 2 H2O + H(+). It participates in cofactor biosynthesis; pyridoxine 5'-phosphate biosynthesis; pyridoxine 5'-phosphate from D-erythrose 4-phosphate: step 5/5. In terms of biological role, catalyzes the complicated ring closure reaction between the two acyclic compounds 1-deoxy-D-xylulose-5-phosphate (DXP) and 3-amino-2-oxopropyl phosphate (1-amino-acetone-3-phosphate or AAP) to form pyridoxine 5'-phosphate (PNP) and inorganic phosphate. The protein is Pyridoxine 5'-phosphate synthase of Xylella fastidiosa (strain M12).